Consider the following 403-residue polypeptide: Acetyl-CoA acetyltransferase 2 (403 aa).

Residue Cys97 is the Acyl-thioester intermediate of the active site. Residue Lys237 coordinates CoA. Ala254 is a binding site for K(+). Position 258 (Ser258) interacts with CoA. Position 355 (Val355) interacts with K(+). Catalysis depends on proton acceptor residues His359 and Cys389.

Belongs to the thiolase-like superfamily. Thiolase family. Expressed in root tips, emerging leaves, young leaves, stems, and anthers at the microspore stage.

The protein resides in the cytoplasm. It localises to the peroxisome. The catalysed reaction is 2 acetyl-CoA = acetoacetyl-CoA + CoA. It participates in metabolic intermediate biosynthesis; (R)-mevalonate biosynthesis; (R)-mevalonate from acetyl-CoA: step 1/3. Functionally, catalyzes the condensation of two molecules of acetyl-CoA to produce acetoacetyl-CoA. Generates the bulk of the acetoacetyl-CoA precursor required for the cytosol-localized, mevalonate-derived isoprenoid biosynthesis. The generated isoprenoids are required for normal growth and development. Essential protein during embryogenesis. This Arabidopsis thaliana (Mouse-ear cress) protein is Acetyl-CoA acetyltransferase 2.